A 397-amino-acid chain; its full sequence is Potassium channel subfamily K member 4 (397 aa).

At 1–3 the chain is on the cytoplasmic side; the sequence is MRS. The helical transmembrane segment at 4–24 threads the bilayer; the sequence is TTLLALLALVLLYLVSGALVF. The Extracellular portion of the chain corresponds to 25 to 88; the sequence is QALEQPHEQQ…WTNSSNHSSA (64 aa). Asparagine 81 is a glycosylation site (N-linked (GlcNAc...) asparagine). An intramembrane region (helical) is located at residues 89–103; it reads WNLGSAFFFSGTIIT. K(+)-binding residues include threonine 104, isoleucine 105, glycine 106, and tyrosine 107. The segment at 104 to 109 is selectivity filter 1; sequence TIGYGN. The stretch at 104–110 is an intramembrane region; the sequence is TIGYGNI. Residues 111-118 lie on the Extracellular side of the membrane; that stretch reads ALHTDAGR. A helical transmembrane segment spans residues 119 to 151; sequence LFCIFYALVGIPLFGMLLAGVGDRLGSSLRRGI. The Cytoplasmic segment spans residues 152-173; that stretch reads GHIEAVFLKWHVPPGLVRMLSA. A helical membrane pass occupies residues 174-195; it reads VLFLLIGCLLFVLTPTFVFSYM. Over 196–200 the chain is Extracellular; that stretch reads ESWSK. An intramembrane region (helical) is located at residues 201-214; it reads LEAIYFVIVTLTTV. The K(+) site is built by threonine 213, valine 214, glycine 215, and phenylalanine 216. The tract at residues 213–218 is selectivity filter 2; that stretch reads TVGFGD. Residues 215-220 lie within the membrane without spanning it; it reads GFGDYV. The Extracellular portion of the chain corresponds to 221–234; the sequence is PGDGTGQNSPAYQP. The helical transmembrane segment at 235-261 threads the bilayer; it reads LVWFWILFGLAYFASVLTTIGNWLRAV. The Cytoplasmic segment spans residues 262–397; it reads SRRTRAEMGG…GRLRDKAVPV (136 aa). Over residues 282 to 292 the composition is skewed to polar residues; it reads TVTARVTQRTG. The tract at residues 282–397 is disordered; it reads TVTARVTQRT…GRLRDKAVPV (116 aa). The segment covering 369–388 has biased composition (basic residues); sequence PRGRRRPNPTKKPSRPRGPG.

The protein belongs to the two pore domain potassium channel (TC 1.A.1.8) family. Homodimer; disulfide-linked. Forms heterodimers with other 2-pore domain K(+) channel subunits, such as KCNK2 and KCNK10. Detected in brain, and at much lower levels in liver, skeletal muscle and testis.

Its subcellular location is the cell membrane. The protein resides in the cell projection. It localises to the axon. It catalyses the reaction K(+)(in) = K(+)(out). The enzyme catalyses Rb(+)(in) = Rb(+)(out). It carries out the reaction Cs(+)(in) = Cs(+)(out). With respect to regulation, activated by various stimuli including intracellular basic pH, mechanical stretch and heat and polyunsaturated fatty acids such as arachidonic acid. Its function is as follows. K(+) channel that conducts voltage-dependent outward rectifying currents upon membrane depolarization. Voltage sensing is coupled to K(+) electrochemical gradient in an 'ion flux gating' mode where outward but not inward ion flow opens the gate. Converts to voltage-independent 'leak' conductance mode upon stimulation by various stimuli including mechanical membrane stretch, basic pH, heat and lipids. Homo- and heterodimerizes to form functional channels with distinct regulatory and gating properties. At trigeminal A-beta afferent nerves, the heterodimer of KCNK2/TREK-1 and KCNK4/TRAAK is mostly coexpressed at nodes of Ranvier where it conducts voltage-independent mechanosensitive and thermosensitive currents, allowing rapid action potential repolarization, high speed and high frequence saltatory conduction on myelinated nerves to ensure prompt sensory responses. Permeable to other monovalent cations such as Rb(+) and Cs(+). The polypeptide is Potassium channel subfamily K member 4 (Rattus norvegicus (Rat)).